A 78-amino-acid chain; its full sequence is UPF0270 protein ECA4061 (78 aa).

The protein belongs to the UPF0270 family.

In Pectobacterium atrosepticum (strain SCRI 1043 / ATCC BAA-672) (Erwinia carotovora subsp. atroseptica), this protein is UPF0270 protein ECA4061.